Consider the following 156-residue polypeptide: Photosystem I reaction center subunit XI (156 aa).

The next 2 helical transmembrane spans lie at 75-95 and 128-148; these read GGLL…SLYA and FFIG…ALYF.

This sequence belongs to the PsaL family.

It localises to the cellular thylakoid membrane. In Crocosphaera subtropica (strain ATCC 51142 / BH68) (Cyanothece sp. (strain ATCC 51142)), this protein is Photosystem I reaction center subunit XI.